Consider the following 413-residue polypeptide: Tyrosine--tRNA ligase (413 aa).

An L-tyrosine-binding site is contributed by tyrosine 34. Residues 39-48 (CTAQSLHVGN) carry the 'HIGH' region motif. L-tyrosine contacts are provided by tyrosine 171 and glutamine 175. The short motif at 231–235 (KMGKT) is the 'KMSKS' region element. Lysine 234 contacts ATP. In terms of domain architecture, S4 RNA-binding spans 346–411 (IPITELLVTI…GKKCHILVKI (66 aa)).

Belongs to the class-I aminoacyl-tRNA synthetase family. TyrS type 1 subfamily. As to quaternary structure, homodimer.

It is found in the cytoplasm. It carries out the reaction tRNA(Tyr) + L-tyrosine + ATP = L-tyrosyl-tRNA(Tyr) + AMP + diphosphate + H(+). Catalyzes the attachment of tyrosine to tRNA(Tyr) in a two-step reaction: tyrosine is first activated by ATP to form Tyr-AMP and then transferred to the acceptor end of tRNA(Tyr). The chain is Tyrosine--tRNA ligase from Orientia tsutsugamushi (strain Boryong) (Rickettsia tsutsugamushi).